The chain runs to 309 residues: Cytochrome c biogenesis protein CcsA (309 aa).

8 consecutive transmembrane segments (helical) span residues 18-38 (LGILVFYILLVNLPISLGAVF), 43-63 (FFIVKLLTILVNLLITLQLLF), 67-87 (ISGHFPVSNLYESLYFLAWGI), 102-122 (IIPSIAIPIELLTVAFACFVL), 148-168 (VMLSYAALIIGSLLSASVLFI), 216-236 (SILIGFVLLTLGLISGAVWAN), 250-267 (TWAFITWLFYAAYLHMRI), and 279-299 (LATSGFLVVIVCYLGVNFLGI).

Belongs to the CcmF/CycK/Ccl1/NrfE/CcsA family. As to quaternary structure, may interact with ccs1.

The protein localises to the cellular thylakoid membrane. Its function is as follows. Required during biogenesis of c-type cytochromes (cytochrome c6 and cytochrome f) at the step of heme attachment. The protein is Cytochrome c biogenesis protein CcsA of Prochlorococcus marinus (strain MIT 9312).